A 177-amino-acid chain; its full sequence is MSRVAKAPVVIPAGVEVKLNGQDISIKGKNGELSRKIHNAVEVKQADNALTFAPREGFVDGWAQAGTTRALLNAMVIGVTEGFTKKLQLVGVGYRAAVKGNMVNLSLGFSHPVEHALPAGITAECPSQTEIVLKGADKQVIGQVAAELRAYRRPEPYKGKGVRYADEVVRTKEAKKK.

The protein belongs to the universal ribosomal protein uL6 family. In terms of assembly, part of the 50S ribosomal subunit.

This protein binds to the 23S rRNA, and is important in its secondary structure. It is located near the subunit interface in the base of the L7/L12 stalk, and near the tRNA binding site of the peptidyltransferase center. The polypeptide is Large ribosomal subunit protein uL6 (Pectobacterium atrosepticum (strain SCRI 1043 / ATCC BAA-672) (Erwinia carotovora subsp. atroseptica)).